The chain runs to 903 residues: Protein translocase subunit SecA (903 aa).

Residues glutamine 87, 105–109, and aspartate 507 contribute to the ATP site; that span reads GEGKT. The disordered stretch occupies residues 854–893; that stretch reads STMADSSGDVKSSTAESKAPYVRDGRKVGRNEPCPCGSGK. Positions 856–869 are enriched in polar residues; the sequence is MADSSGDVKSSTAE. Over residues 874–883 the composition is skewed to basic and acidic residues; the sequence is YVRDGRKVGR. Residues cysteine 887, cysteine 889, cysteine 898, and histidine 899 each coordinate Zn(2+).

This sequence belongs to the SecA family. As to quaternary structure, monomer and homodimer. Part of the essential Sec protein translocation apparatus which comprises SecA, SecYEG and auxiliary proteins SecDF-YajC and YidC. Zn(2+) is required as a cofactor.

Its subcellular location is the cell inner membrane. It localises to the cytoplasm. It catalyses the reaction ATP + H2O + cellular proteinSide 1 = ADP + phosphate + cellular proteinSide 2.. Part of the Sec protein translocase complex. Interacts with the SecYEG preprotein conducting channel. Has a central role in coupling the hydrolysis of ATP to the transfer of proteins into and across the cell membrane, serving both as a receptor for the preprotein-SecB complex and as an ATP-driven molecular motor driving the stepwise translocation of polypeptide chains across the membrane. The protein is Protein translocase subunit SecA of Nitrosococcus oceani (strain ATCC 19707 / BCRC 17464 / JCM 30415 / NCIMB 11848 / C-107).